The sequence spans 579 residues: Glypican-2 (579 aa).

A signal peptide spans 1–23 (MSALRPLLLLLLPLCPGPGPGPG). 3 O-linked (Xyl...) (heparan sulfate) serine glycosylation sites follow: Ser55, Ser92, and Ser155. Disordered stretches follow at residues 444–468 (GGSP…VPTR) and 485–555 (ALGH…RSGG). 2 O-linked (Xyl...) (heparan sulfate) serine glycosylation sites follow: Ser500 and Ser502. The segment covering 520–529 (PARPPRPPYP) has biased composition (pro residues). A lipid anchor (GPI-anchor amidated glycine) is attached at Gly554. A propeptide spans 555-579 (GASIGFHTQTILILSLSALALLGPR) (removed in mature form).

This sequence belongs to the glypican family. As to quaternary structure, interacts (via heparan sulfate) with PTN; this interaction promotes neurite outgrowth through binding of PTN with chondroitin sulfate of proteoglycans, thereby releasing PTPRS of chondroitin sulfate proteoglycans (CSPGs) and leading to binding with heparan sulfate of GPC2. Interacts (heparan sulfate chain) with MDK; this interaction is inhibited by heparin followed by chondroitin sulfate E; this interaction induces GPC2 clustering through heparan sulfate chain; this interaction induces neuronal cell adhesion and neurite outgrowth.

Its subcellular location is the cell membrane. It localises to the secreted. The protein localises to the extracellular space. Its function is as follows. Cell surface proteoglycan that bears heparan sulfate. May fulfill a function related to the motile behaviors of developing neurons. In Homo sapiens (Human), this protein is Glypican-2 (GPC2).